The primary structure comprises 460 residues: GTPase Der (460 aa).

EngA-type G domains follow at residues 2 to 164 (QSII…HEEF) and 196 to 368 (IRVG…ENFT). GTP is bound by residues 8 to 15 (GKPNVGKS), 55 to 59 (DSGGL), 116 to 119 (NKVD), 202 to 209 (GRVNVGKS), 249 to 253 (DTAGI), and 313 to 316 (NKWD). The KH-like domain maps to 369-453 (QKIQTSKLNT…PLVIASRKKG (85 aa)).

This sequence belongs to the TRAFAC class TrmE-Era-EngA-EngB-Septin-like GTPase superfamily. EngA (Der) GTPase family. In terms of assembly, associates with the 50S ribosomal subunit.

Functionally, GTPase that plays an essential role in the late steps of ribosome biogenesis. This chain is GTPase Der, found in Campylobacter jejuni subsp. jejuni serotype O:2 (strain ATCC 700819 / NCTC 11168).